A 278-amino-acid polypeptide reads, in one-letter code: Aliphatic sulfonates import ATP-binding protein SsuB (278 aa).

The ABC transporter domain occupies 15–236 (LVLRDLSKRF…SQGDAAFAAL (222 aa)). 47-54 (GRSGCGKS) contacts ATP. The span at 251–264 (PERESFTHPNDGEP) shows a compositional bias: basic and acidic residues. A disordered region spans residues 251-278 (PERESFTHPNDGEPRWPGVPAHGVRWAV).

It belongs to the ABC transporter superfamily. Aliphatic sulfonates importer (TC 3.A.1.17.2) family. The complex is composed of two ATP-binding proteins (SsuB), two transmembrane proteins (SsuC) and a solute-binding protein (SsuA).

The protein localises to the cell inner membrane. It carries out the reaction ATP + H2O + aliphatic sulfonate-[sulfonate-binding protein]Side 1 = ADP + phosphate + aliphatic sulfonateSide 2 + [sulfonate-binding protein]Side 1.. Part of the ABC transporter complex SsuABC involved in aliphatic sulfonates import. Responsible for energy coupling to the transport system. The sequence is that of Aliphatic sulfonates import ATP-binding protein SsuB from Albidiferax ferrireducens (strain ATCC BAA-621 / DSM 15236 / T118) (Rhodoferax ferrireducens).